Consider the following 464-residue polypeptide: PH domain-containing rcdII (464 aa).

A coiled-coil region spans residues 8–210 (KSSKEIIEDL…NTKLMSNLEI (203 aa)). Disordered stretches follow at residues 215–290 (NFNN…NSSG) and 317–347 (CNNNNNNNNGNSKLSTGVPITRSRSSSSNSN). Low complexity-rich tracts occupy residues 234–288 (STTT…SSNS), 317–328 (CNNNNNNNNGNS), and 338–347 (RSRSSSSNSN). In terms of domain architecture, PH spans 353-461 (KIVKEGWLKR…WKDTISSLMP (109 aa)).

This Dictyostelium discoideum (Social amoeba) protein is PH domain-containing rcdII (rcdII).